We begin with the raw amino-acid sequence, 95 residues long: MTFRPLHDRVLVRRVEAEEKTAGGIIIPDSAKEKPAEGIVVAVGSGARAENGTITPLDVKANDRVLFGKWSGTEVKVDGEDLLIMKESDILGVIG.

It belongs to the GroES chaperonin family. Heptamer of 7 subunits arranged in a ring. Interacts with the chaperonin GroEL.

It localises to the cytoplasm. Functionally, together with the chaperonin GroEL, plays an essential role in assisting protein folding. The GroEL-GroES system forms a nano-cage that allows encapsulation of the non-native substrate proteins and provides a physical environment optimized to promote and accelerate protein folding. GroES binds to the apical surface of the GroEL ring, thereby capping the opening of the GroEL channel. The chain is Co-chaperonin GroES from Novosphingobium aromaticivorans (strain ATCC 700278 / DSM 12444 / CCUG 56034 / CIP 105152 / NBRC 16084 / F199).